Reading from the N-terminus, the 76-residue chain is Conotoxin PnMKLT1-1111 (76 aa).

An N-terminal signal peptide occupies residues 1–22 (MKLTCMMIVAVLFLTAWTVVTA). The propeptide occupies 23–50 (VPHSNKRLANLYLKARHEMKNPEASNVD). Cystine bridges form between C53/C67, C60/C71, and C66/C75.

It belongs to the conotoxin O1 superfamily. As to expression, expressed by the venom duct.

It is found in the secreted. In Conus pennaceus (Feathered cone), this protein is Conotoxin PnMKLT1-1111.